The following is a 363-amino-acid chain: Ferrochelatase (363 aa).

Residues His209 and Glu290 each coordinate Fe cation.

This sequence belongs to the ferrochelatase family.

The protein resides in the cytoplasm. It catalyses the reaction heme b + 2 H(+) = protoporphyrin IX + Fe(2+). It functions in the pathway porphyrin-containing compound metabolism; protoheme biosynthesis; protoheme from protoporphyrin-IX: step 1/1. In terms of biological role, catalyzes the ferrous insertion into protoporphyrin IX. In Methylibium petroleiphilum (strain ATCC BAA-1232 / LMG 22953 / PM1), this protein is Ferrochelatase.